The sequence spans 929 residues: SED5-binding protein 3 (929 aa).

Residue S15 is modified to Phosphoserine. Polar residues predominate over residues 18-28 (ESTVHTGGASS). Positions 18–52 (ESTVHTGGASSKKSRRPHRAYHNFSSGTVPTLGNS) are disordered. Over residues 29-38 (KKSRRPHRAY) the composition is skewed to basic residues. Residues 40–52 (NFSSGTVPTLGNS) show a composition bias toward polar residues. Phosphothreonine is present on T72. S83, S85, S94, S101, and S110 each carry phosphoserine. T216 carries the post-translational modification Phosphothreonine. Residues 220 to 244 (CRRCRAYANPKFQFTYDSSVICNIC) form a zinc finger-like region.

It belongs to the SEC23/SEC24 family. SEC24 subfamily. As to quaternary structure, COPII is composed of at least five proteins: the SEC23/24 complex, the SEC13/31 complex and SAR1. Binds to SED5. Interacts with GHR1.

It localises to the cytoplasm. The protein localises to the golgi apparatus membrane. The protein resides in the endoplasmic reticulum membrane. Functionally, component of the COPII coat, that covers ER-derived vesicles involved in transport from the endoplasmic reticulum to the Golgi apparatus. COPII acts in the cytoplasm to promote the transport of secretory, plasma membrane, and vacuolar proteins from the endoplasmic reticulum to the Golgi complex. This Saccharomyces cerevisiae (strain ATCC 204508 / S288c) (Baker's yeast) protein is SED5-binding protein 3 (SFB3).